A 1005-amino-acid chain; its full sequence is Probable histidine kinase 4 (1005 aa).

Residues 1-37 (MGVGGGGGGGGGEAAAAVAVEGDEAGKGRRWWRVKVK) are Cytoplasmic-facing. A helical membrane pass occupies residues 38 to 58 (LSTVAVVAWVLASAALWAGLH). At 59–333 (WRFRRAALHK…YRNKLHVSWS (275 aa)) the chain is on the extracellular side. Residues 110-321 (HPPALDQDTF…GDPLRKHQMV (212 aa)) enclose the CHASE domain. A helical membrane pass occupies residues 334 to 354 (AITTPSGVFVICMLVGYIIYA). Residues 355–1005 (AWSRYDNVKE…QKFLGPCVSS (651 aa)) are Cytoplasmic-facing. Residues 389-675 (TVSHEIRTPM…TFTFTAVLRR (287 aa)) form the Histidine kinase domain. Histidine 392 bears the Phosphohistidine; by autocatalysis mark. Response regulatory domains are found at residues 700–829 (SALL…FQAL) and 862–999 (NILV…QKFL). At aspartate 912 the chain carries 4-aspartylphosphate.

Activation probably requires a transfer of a phosphate group between a His in the transmitter domain and an Asp of the receiver domain. In terms of tissue distribution, highly expressed in young leaves and spikelets, and at lower levels in roots, mature leaves and stems.

The protein localises to the cell membrane. It catalyses the reaction ATP + protein L-histidine = ADP + protein N-phospho-L-histidine.. In terms of biological role, cytokinin receptor related to bacterial two-component regulators. Functions as a histidine kinase and transmits the stress signal to a downstream MAPK cascade. In Oryza sativa subsp. japonica (Rice), this protein is Probable histidine kinase 4.